We begin with the raw amino-acid sequence, 87 residues long: Small ribosomal subunit protein uS17 (87 aa).

The protein belongs to the universal ribosomal protein uS17 family. Part of the 30S ribosomal subunit.

One of the primary rRNA binding proteins, it binds specifically to the 5'-end of 16S ribosomal RNA. This chain is Small ribosomal subunit protein uS17, found in Endomicrobium trichonymphae.